An 81-amino-acid polypeptide reads, in one-letter code: Cytochrome b559 subunit alpha (81 aa).

A helical membrane pass occupies residues 21–35 (IIHSITIPMLFIAGW). His23 lines the heme pocket.

This sequence belongs to the PsbE/PsbF family. In terms of assembly, heterodimer of an alpha subunit and a beta subunit. PSII is composed of 1 copy each of membrane proteins PsbA, PsbB, PsbC, PsbD, PsbE, PsbF, PsbH, PsbI, PsbJ, PsbK, PsbL, PsbM, PsbT, PsbX, PsbY, PsbZ, Psb30/Ycf12, peripheral proteins PsbO, CyanoQ (PsbQ), PsbU, PsbV and a large number of cofactors. It forms dimeric complexes. Heme b serves as cofactor.

It is found in the cellular thylakoid membrane. Its function is as follows. This b-type cytochrome is tightly associated with the reaction center of photosystem II (PSII). PSII is a light-driven water:plastoquinone oxidoreductase that uses light energy to abstract electrons from H(2)O, generating O(2) and a proton gradient subsequently used for ATP formation. It consists of a core antenna complex that captures photons, and an electron transfer chain that converts photonic excitation into a charge separation. The protein is Cytochrome b559 subunit alpha of Microcystis aeruginosa (strain NIES-843 / IAM M-2473).